The sequence spans 299 residues: 4-diphosphocytidyl-2-C-methyl-D-erythritol kinase (299 aa).

Lys16 is a catalytic residue. Pro101–Ala111 is a binding site for ATP. The active site involves Asp143.

This sequence belongs to the GHMP kinase family. IspE subfamily.

The enzyme catalyses 4-CDP-2-C-methyl-D-erythritol + ATP = 4-CDP-2-C-methyl-D-erythritol 2-phosphate + ADP + H(+). Its pathway is isoprenoid biosynthesis; isopentenyl diphosphate biosynthesis via DXP pathway; isopentenyl diphosphate from 1-deoxy-D-xylulose 5-phosphate: step 3/6. Catalyzes the phosphorylation of the position 2 hydroxy group of 4-diphosphocytidyl-2C-methyl-D-erythritol. In Rhodopseudomonas palustris (strain ATCC BAA-98 / CGA009), this protein is 4-diphosphocytidyl-2-C-methyl-D-erythritol kinase.